Reading from the N-terminus, the 401-residue chain is Probable inactive purple acid phosphatase 14 (401 aa).

The first 30 residues, 1–30 (MEETRRRFVISSVLSVSLIYLCLSTCHVSA), serve as a signal peptide directing secretion. Asn-79 carries an N-linked (GlcNAc...) asparagine glycan. Asn-197 contributes to the substrate binding site. Asn-197 is a Zn(2+) binding site. An N-linked (GlcNAc...) asparagine glycan is attached at Asn-246. A Zn(2+)-binding site is contributed by His-256. A glycan (N-linked (GlcNAc...) asparagine) is linked at Asn-266. His-305 is a Zn(2+) binding site. 305-307 (HDH) is a binding site for substrate. His-307 contacts Fe cation. 2 N-linked (GlcNAc...) asparagine glycosylation sites follow: Asn-371 and Asn-384.

It belongs to the metallophosphoesterase superfamily. Purple acid phosphatase family. As to quaternary structure, homodimer. It depends on Fe cation as a cofactor. Requires Zn(2+) as cofactor. As to expression, specifically expressed in flowers.

It is found in the secreted. The sequence is that of Probable inactive purple acid phosphatase 14 (PAP14) from Arabidopsis thaliana (Mouse-ear cress).